A 642-amino-acid polypeptide reads, in one-letter code: Threonine--tRNA ligase (642 aa).

A TGS domain is found at 1 to 61; that stretch reads MPVIRFYDGS…REDAFIEFVD (61 aa). The interval 243 to 534 is catalytic; the sequence is DHRKIGKFLQ…LIEECSGNLP (292 aa). Positions 334, 385, and 511 each coordinate Zn(2+).

The protein belongs to the class-II aminoacyl-tRNA synthetase family. In terms of assembly, homodimer. It depends on Zn(2+) as a cofactor.

The protein localises to the cytoplasm. It carries out the reaction tRNA(Thr) + L-threonine + ATP = L-threonyl-tRNA(Thr) + AMP + diphosphate + H(+). Catalyzes the attachment of threonine to tRNA(Thr) in a two-step reaction: L-threonine is first activated by ATP to form Thr-AMP and then transferred to the acceptor end of tRNA(Thr). Also edits incorrectly charged L-seryl-tRNA(Thr). The protein is Threonine--tRNA ligase of Buchnera aphidicola subsp. Acyrthosiphon pisum (strain 5A).